The following is a 522-amino-acid chain: Bifunctional purine biosynthesis protein PurH (522 aa).

The MGS-like domain maps to 1-145; the sequence is MKPIARALIS…KNHAAVTVIV (145 aa).

Belongs to the PurH family.

It carries out the reaction (6R)-10-formyltetrahydrofolate + 5-amino-1-(5-phospho-beta-D-ribosyl)imidazole-4-carboxamide = 5-formamido-1-(5-phospho-D-ribosyl)imidazole-4-carboxamide + (6S)-5,6,7,8-tetrahydrofolate. The catalysed reaction is IMP + H2O = 5-formamido-1-(5-phospho-D-ribosyl)imidazole-4-carboxamide. It functions in the pathway purine metabolism; IMP biosynthesis via de novo pathway; 5-formamido-1-(5-phospho-D-ribosyl)imidazole-4-carboxamide from 5-amino-1-(5-phospho-D-ribosyl)imidazole-4-carboxamide (10-formyl THF route): step 1/1. The protein operates within purine metabolism; IMP biosynthesis via de novo pathway; IMP from 5-formamido-1-(5-phospho-D-ribosyl)imidazole-4-carboxamide: step 1/1. The polypeptide is Bifunctional purine biosynthesis protein PurH (Nitrosococcus oceani (strain ATCC 19707 / BCRC 17464 / JCM 30415 / NCIMB 11848 / C-107)).